Reading from the N-terminus, the 178-residue chain is Small ribosomal subunit protein uS5 (178 aa).

Positions 17 to 80 (FEERIVEIRR…AAARASVVEI (64 aa)) constitute an S5 DRBM domain.

The protein belongs to the universal ribosomal protein uS5 family. As to quaternary structure, part of the 30S ribosomal subunit. Contacts proteins S4 and S8.

With S4 and S12 plays an important role in translational accuracy. Its function is as follows. Located at the back of the 30S subunit body where it stabilizes the conformation of the head with respect to the body. The chain is Small ribosomal subunit protein uS5 from Pseudothermotoga lettingae (strain ATCC BAA-301 / DSM 14385 / NBRC 107922 / TMO) (Thermotoga lettingae).